The following is a 102-amino-acid chain: Small ribosomal subunit protein uS10 (102 aa).

It belongs to the universal ribosomal protein uS10 family. In terms of assembly, part of the 30S ribosomal subunit.

Involved in the binding of tRNA to the ribosomes. The polypeptide is Small ribosomal subunit protein uS10 (Oenococcus oeni (strain ATCC BAA-331 / PSU-1)).